We begin with the raw amino-acid sequence, 127 residues long: Biogenesis of lysosome-related organelles complex 1 subunit 2 (127 aa).

Belongs to the BLOC1S2 family. In terms of assembly, component of the biogenesis of lysosome-related organelles complex-1 (BLOC-1). Interacts with BLOS1 and SNX1.

It is found in the cytoplasm. Its subcellular location is the endosome. Functionally, component of the biogenesis of lysosome-related organelles complex-1 (BLOC-1), a complex that mediates the vacuolar degradative transport via the intracellular vesicle trafficking from the endosome to the vacuole. This chain is Biogenesis of lysosome-related organelles complex 1 subunit 2 (BLOS2), found in Arabidopsis thaliana (Mouse-ear cress).